The sequence spans 275 residues: Diaminopimelate epimerase (275 aa).

Asn12, Gln45, and Asn65 together coordinate substrate. Cys74 acts as the Proton donor in catalysis. Substrate-binding positions include 75 to 76 (GN), Asn158, Asn191, and 209 to 210 (ER). The Proton acceptor role is filled by Cys218. 219-220 (GT) serves as a coordination point for substrate.

This sequence belongs to the diaminopimelate epimerase family. As to quaternary structure, homodimer.

It localises to the cytoplasm. It catalyses the reaction (2S,6S)-2,6-diaminopimelate = meso-2,6-diaminopimelate. It participates in amino-acid biosynthesis; L-lysine biosynthesis via DAP pathway; DL-2,6-diaminopimelate from LL-2,6-diaminopimelate: step 1/1. Its function is as follows. Catalyzes the stereoinversion of LL-2,6-diaminopimelate (L,L-DAP) to meso-diaminopimelate (meso-DAP), a precursor of L-lysine and an essential component of the bacterial peptidoglycan. The sequence is that of Diaminopimelate epimerase from Shewanella oneidensis (strain ATCC 700550 / JCM 31522 / CIP 106686 / LMG 19005 / NCIMB 14063 / MR-1).